We begin with the raw amino-acid sequence, 130 residues long: Small ribosomal subunit protein uS9 (130 aa).

The protein belongs to the universal ribosomal protein uS9 family.

The polypeptide is Small ribosomal subunit protein uS9 (Phytoplasma australiense).